Consider the following 117-residue polypeptide: Large ribosomal subunit protein uL18 (117 aa).

The protein belongs to the universal ribosomal protein uL18 family. As to quaternary structure, part of the 50S ribosomal subunit; part of the 5S rRNA/L5/L18/L25 subcomplex. Contacts the 5S and 23S rRNAs.

In terms of biological role, this is one of the proteins that bind and probably mediate the attachment of the 5S RNA into the large ribosomal subunit, where it forms part of the central protuberance. This chain is Large ribosomal subunit protein uL18, found in Leuconostoc mesenteroides subsp. mesenteroides (strain ATCC 8293 / DSM 20343 / BCRC 11652 / CCM 1803 / JCM 6124 / NCDO 523 / NBRC 100496 / NCIMB 8023 / NCTC 12954 / NRRL B-1118 / 37Y).